The following is a 461-amino-acid chain: Protein naked cuticle homolog 2 (461 aa).

Residues 1 to 106 (MGKFQSKHAA…DGEKAASREG (106 aa)) are disordered. Gly2 is lipidated: N-myristoyl glycine. 2 stretches are compositionally biased toward basic and acidic residues: residues 34–73 (RGAEETDRRAGSGVEHRSRDKQELLNGDPKEGPFWDDKGS) and 97–106 (DGEKAASREG). An interaction with DVL1, DVL2 and DVL3 region spans residues 121–186 (QCDVSVEEDN…LRVKLTVSPE (66 aa)). The region spanning 127–162 (EEDNRQEWTFTLYDFDNSGKVTREDMSSLMHTIYEV) is the EF-hand domain. Residues Asp140, Asp142, Ser144, Lys146, and Asp151 each coordinate Ca(2+). Disordered regions lie at residues 176-205 (TLRVKLTVSPEPSSKKECPLTGQDREPTRG), 263-302 (YTSKFGPGSPPEQARQEHHGRATHIPSRSRSQESDAHAIH), 321-359 (TRALAAQPRIKGQEKQFLRSPKGPGKPLGTPGSGKPGKA), 372-414 (SAQD…GQPT), and 441-461 (HEHHHHHEHHHHHHHHHFHPS). Residues 188–205 (SSKKECPLTGQDREPTRG) are compositionally biased toward basic and acidic residues. Positions 307–396 (QVLAEHVIPA…PPQPYGHKRY (90 aa)) are interaction with TGFA. A compositionally biased stretch (low complexity) spans 341–350 (PKGPGKPLGT). Over residues 380–390 (PQPPPQPPPQP) the composition is skewed to pro residues.

It belongs to the NKD family. As to quaternary structure, interacts with RNF25, TGFA (via cytoplasmic domain), and PPP2R3A. Interacts with DVL1, DVL2 and DVL3. Post-translationally, ubiquitinated, leading to rapid proteasomal degradation. Interaction with TGFA interferes with RNF25 binding and protects against ubiquitination mediated by RNF25. Expressed in the cecum, colon, esophagus, ileum, jejunum, skin and stomach.

The protein resides in the cell membrane. Its subcellular location is the cytoplasm. It localises to the cytoplasmic vesicle. Its function is as follows. Cell autonomous antagonist of the canonical Wnt signaling pathway. May activate a second Wnt signaling pathway that controls planar cell polarity. Required for processing of TGFA and for targeting of TGFA to the basolateral membrane of polarized epithelial cells. This Mus musculus (Mouse) protein is Protein naked cuticle homolog 2 (Nkd2).